Reading from the N-terminus, the 371-residue chain is Nicotinate-nucleotide pyrophosphorylase [carboxylating], chloroplastic (371 aa).

Residues 1–48 (MPAAAAAAAPPNPNVLQLAPRLRGLVSFPSSYSSSSPFSNRLRLRLPR) constitute a chloroplast transit peptide. Substrate is bound by residues Arg-162, 193-195 (TRK), Arg-217, Lys-227, Glu-260, Asp-287, 319-321 (SGN), and 340-342 (SGA).

This sequence belongs to the NadC/ModD family.

It localises to the plastid. The protein resides in the chloroplast. It catalyses the reaction nicotinate beta-D-ribonucleotide + CO2 + diphosphate = quinolinate + 5-phospho-alpha-D-ribose 1-diphosphate + 2 H(+). It functions in the pathway cofactor biosynthesis; NAD(+) biosynthesis; nicotinate D-ribonucleotide from quinolinate: step 1/1. Its function is as follows. Involved in the catabolism of quinolinic acid (QA). The protein is Nicotinate-nucleotide pyrophosphorylase [carboxylating], chloroplastic of Oryza sativa subsp. japonica (Rice).